We begin with the raw amino-acid sequence, 266 residues long: Eukaryotic translation initiation factor 3 subunit J (266 aa).

2 disordered regions span residues 1-142 (MAPS…VSDS) and 215-243 (MSNE…VSLV). A compositionally biased stretch (acidic residues) spans 26 to 44 (DEEEEDVLDSWDAAEDSEV). Residues 40-99 (EDSEVEREKAAKAAEAKAKAEAEAAAKKKSKAQRIQEHKEERKKREEEDSSSESEEDEAE) adopt a coiled-coil conformation. Composition is skewed to basic and acidic residues over residues 45 to 65 (EREK…EAAA) and 73 to 86 (RIQE…KREE). Over residues 87 to 97 (EDSSSESEEDE) the composition is skewed to acidic residues. Basic and acidic residues-rich tracts occupy residues 98–118 (AERR…HAED) and 218–230 (EKMR…DKGN).

This sequence belongs to the eIF-3 subunit J family. Component of the eukaryotic translation initiation factor 3 (eIF-3) complex.

It localises to the cytoplasm. In terms of biological role, component of the eukaryotic translation initiation factor 3 (eIF-3) complex, which is involved in protein synthesis of a specialized repertoire of mRNAs and, together with other initiation factors, stimulates binding of mRNA and methionyl-tRNAi to the 40S ribosome. The eIF-3 complex specifically targets and initiates translation of a subset of mRNAs involved in cell proliferation. In Aspergillus terreus (strain NIH 2624 / FGSC A1156), this protein is Eukaryotic translation initiation factor 3 subunit J (hcr1).